Here is a 315-residue protein sequence, read N- to C-terminus: Acetyl-coenzyme A carboxylase carboxyl transferase subunit alpha (315 aa).

Residues N32–M293 enclose the CoA carboxyltransferase C-terminal domain.

It belongs to the AccA family. As to quaternary structure, acetyl-CoA carboxylase is a heterohexamer composed of biotin carboxyl carrier protein (AccB), biotin carboxylase (AccC) and two subunits each of ACCase subunit alpha (AccA) and ACCase subunit beta (AccD).

The protein resides in the cytoplasm. It carries out the reaction N(6)-carboxybiotinyl-L-lysyl-[protein] + acetyl-CoA = N(6)-biotinyl-L-lysyl-[protein] + malonyl-CoA. It functions in the pathway lipid metabolism; malonyl-CoA biosynthesis; malonyl-CoA from acetyl-CoA: step 1/1. Its function is as follows. Component of the acetyl coenzyme A carboxylase (ACC) complex. First, biotin carboxylase catalyzes the carboxylation of biotin on its carrier protein (BCCP) and then the CO(2) group is transferred by the carboxyltransferase to acetyl-CoA to form malonyl-CoA. This Pseudomonas putida (strain ATCC 47054 / DSM 6125 / CFBP 8728 / NCIMB 11950 / KT2440) protein is Acetyl-coenzyme A carboxylase carboxyl transferase subunit alpha.